Reading from the N-terminus, the 243-residue chain is Terpene cyclase dpasB (243 aa).

Helical transmembrane passes span 16 to 36 (VVWVTDVCKLVMAVGWLSNYI), 50 to 70 (MALMPLCCNFAWEFTYFFIYP), 79 to 99 (IHTLAFLLNCGVMYTAVRYGA), 112 to 132 (LPVIFVVCIACWVSAHVAFAE), 141 to 161 (AVSGFACQILLSAGGTCQLLC), 172 to 189 (LWLARFMGSFALILPNML), and 207 to 227 (IWFLGMFLFLDGSYGFVLWYV).

The protein belongs to the paxB family.

The protein localises to the membrane. It functions in the pathway secondary metabolite biosynthesis; terpenoid biosynthesis. In terms of biological role, terpene cyclase; part of the gene cluster that mediates the biosynthesis of the diterpenoid pyrones subglutinols A and B. The first step of the pathway is the synthesis of the alpha-pyrone moiety by the polyketide synthase dpasA via condensation of one acetyl-CoA starter unit with 3 malonyl-CoA units and 2 methylations. The alpha-pyrone is then combined with geranylgeranyl pyrophosphate (GGPP) formed by the GGPP synthase dpasD through the action of the prenyltransferase dpasC to yield a linear alpha-pyrone diterpenoid. Subsequent steps in the diterpenoid pyrone biosynthetic pathway involve the decalin core formation, which is initiated by the epoxidation of the C10-C11 olefin by the FAD-dependent oxidoreductase dpasE, and is followed by a cyclization cascade catalyzed by the terpene cyclase dpasB. The FAD-linked oxidoreductase dpasF is then involved in tetrahydrofuran (THF) ring formation at the C5 unit to complete the formation of subglutinols A and B. DpasF possesses also an additional catalytic ability of multi-step oxidations to generate a new DDP analog with an enone system at the C5 named FDDP A. This chain is Terpene cyclase dpasB, found in Apiospora sacchari (Arthrinium sacchari).